Here is a 939-residue protein sequence, read N- to C-terminus: Translation initiation factor IF-2 (939 aa).

The interval 57–274 is disordered; that stretch reads RLKPAAPAAP…APTKKNEQKI (218 aa). Composition is skewed to basic and acidic residues over residues 83-122 and 129-138; these read MEPKEEPQKEVKESVKEAPESLPESPKEEAFEAEIPKESV and LEQEPPKEEL. Polar residues-rich tracts occupy residues 146-158 and 170-180; these read ESASETLSDSNPL and VATTLATQTDA. Residues 208 to 227 show a composition bias toward basic and acidic residues; that stretch reads KRSEEPAPKADRPSLEEART. Positions 252-262 are enriched in basic residues; that stretch reads ARKKKKEKKKP. In terms of domain architecture, tr-type G spans 438 to 607; that stretch reads ERPPVVTIMG…LVQSELLELK (170 aa). Positions 447–454 are G1; it reads GHVDHGKT. 447–454 lines the GTP pocket; that stretch reads GHVDHGKT. Residues 472 to 476 are G2; that stretch reads GITQH. The interval 493–496 is G3; sequence DTPG. Residues 493–497 and 547–550 each bind GTP; these read DTPGH and NKVD. The tract at residues 547–550 is G4; it reads NKVD. The segment at 583-585 is G5; sequence SAK.

This sequence belongs to the TRAFAC class translation factor GTPase superfamily. Classic translation factor GTPase family. IF-2 subfamily.

The protein resides in the cytoplasm. Its function is as follows. One of the essential components for the initiation of protein synthesis. Protects formylmethionyl-tRNA from spontaneous hydrolysis and promotes its binding to the 30S ribosomal subunits. Also involved in the hydrolysis of GTP during the formation of the 70S ribosomal complex. The sequence is that of Translation initiation factor IF-2 from Wolinella succinogenes (strain ATCC 29543 / DSM 1740 / CCUG 13145 / JCM 31913 / LMG 7466 / NCTC 11488 / FDC 602W) (Vibrio succinogenes).